The following is a 502-amino-acid chain: Activin receptor type-1-like (502 aa).

An N-terminal signal peptide occupies residues 1–22; it reads MTLGSFRRGLLMLSVAFGLTRG. Residues 23–119 are Extracellular-facing; that stretch reads DLAKPSKLVN…EEPEVDAHLP (97 aa). Asn32 is a glycosylation site (N-linked (GlcNAc...) asparagine). Cystine bridges form between Cys33/Cys50, Cys35/Cys40, and Cys45/Cys68. The tract at residues 72 to 75 is mediates specificity for BMP ligand; it reads NQEL. Cystine bridges form between Cys76/Cys88 and Cys89/Cys94. Asn97 carries an N-linked (GlcNAc...) asparagine glycan. The helical transmembrane segment at 120–140 threads the bilayer; that stretch reads LILGPVLALPVLVALGALGLW. Residues 141-502 are Cytoplasmic-facing; it reads RVRRRQEKQR…HNPEKPKVIH (362 aa). Phosphoserine occurs at positions 154, 159, and 160. The GS domain maps to 171–200; the sequence is SMLGDFLDSDCTTGSGSGLPFLVQRTVARQ. In terms of domain architecture, Protein kinase spans 201 to 502; the sequence is VALVECVGKG…HNPEKPKVIH (302 aa). Residues 207-215 and Lys228 contribute to the ATP site; that span reads VGKGRYGEV. Catalysis depends on Asp329, which acts as the Proton acceptor.

It belongs to the protein kinase superfamily. TKL Ser/Thr protein kinase family. TGFB receptor subfamily. As to quaternary structure, interacts with TSC22D1/TSC-22. It depends on Mg(2+) as a cofactor. Requires Mn(2+) as cofactor.

The protein localises to the cell membrane. It carries out the reaction L-threonyl-[receptor-protein] + ATP = O-phospho-L-threonyl-[receptor-protein] + ADP + H(+). The catalysed reaction is L-seryl-[receptor-protein] + ATP = O-phospho-L-seryl-[receptor-protein] + ADP + H(+). In terms of biological role, type I receptor for TGF-beta family ligands BMP9/GDF2 and BMP10 and important regulator of normal blood vessel development. On ligand binding, forms a receptor complex consisting of two type II and two type I transmembrane serine/threonine kinases. Type II receptors phosphorylate and activate type I receptors which autophosphorylate, then bind and activate SMAD transcriptional regulators. May bind activin as well. This Mus musculus (Mouse) protein is Activin receptor type-1-like (Acvrl1).